The primary structure comprises 92 residues: Small ribosomal subunit protein uS19 (92 aa).

This sequence belongs to the universal ribosomal protein uS19 family.

Functionally, protein S19 forms a complex with S13 that binds strongly to the 16S ribosomal RNA. This is Small ribosomal subunit protein uS19 from Vibrio parahaemolyticus serotype O3:K6 (strain RIMD 2210633).